A 239-amino-acid polypeptide reads, in one-letter code: Small ribosomal subunit protein uS3 (239 aa).

One can recognise a KH type-2 domain in the interval 39–107 (VREFLRKKLA…ATSINIEEIR (69 aa)). A disordered region spans residues 215–239 (TSNTNELSDEKRNRRKPRNANRRKE). A compositionally biased stretch (basic residues) spans 227 to 239 (NRRKPRNANRRKE).

It belongs to the universal ribosomal protein uS3 family. As to quaternary structure, part of the 30S ribosomal subunit. Forms a tight complex with proteins S10 and S14.

In terms of biological role, binds the lower part of the 30S subunit head. Binds mRNA in the 70S ribosome, positioning it for translation. The polypeptide is Small ribosomal subunit protein uS3 (Dichelobacter nodosus (strain VCS1703A)).